We begin with the raw amino-acid sequence, 179 residues long: NADH-quinone oxidoreductase subunit B 1 (179 aa).

4 residues coordinate [4Fe-4S] cluster: cysteine 38, cysteine 39, cysteine 104, and cysteine 133.

This sequence belongs to the complex I 20 kDa subunit family. In terms of assembly, NDH-1 is composed of 14 different subunits. Subunits NuoB, C, D, E, F, and G constitute the peripheral sector of the complex. It depends on [4Fe-4S] cluster as a cofactor.

It localises to the cell membrane. The catalysed reaction is a quinone + NADH + 5 H(+)(in) = a quinol + NAD(+) + 4 H(+)(out). In terms of biological role, NDH-1 shuttles electrons from NADH, via FMN and iron-sulfur (Fe-S) centers, to quinones in the respiratory chain. The immediate electron acceptor for the enzyme in this species is believed to be ubiquinone. Couples the redox reaction to proton translocation (for every two electrons transferred, four hydrogen ions are translocated across the cytoplasmic membrane), and thus conserves the redox energy in a proton gradient. This is NADH-quinone oxidoreductase subunit B 1 from Herpetosiphon aurantiacus (strain ATCC 23779 / DSM 785 / 114-95).